Reading from the N-terminus, the 146-residue chain is Hemoglobin subunit beta-1 (146 aa).

Position 1 is an N-acetylserine (S1). One can recognise a Globin domain in the interval 2 to 146 (FLSAEEKGLV…VASALAHRYH (145 aa)). K17 bears the N6-succinyllysine mark. Residues S44 and S50 each carry the phosphoserine modification. K59 carries the post-translational modification N6-succinyllysine. Positions 63 and 92 each coordinate heme b. At R104 the chain carries Asymmetric dimethylarginine.

It belongs to the globin family. In terms of assembly, heterotetramer of two alpha chains and two beta chains. As to expression, red blood cells.

Its function is as follows. Involved in oxygen transport from the lung to the various peripheral tissues. The sequence is that of Hemoglobin subunit beta-1 (HBB1) from Panthera leo (Lion).